A 257-amino-acid chain; its full sequence is Imidazole glycerol phosphate synthase subunit HisF (257 aa).

Residues Asp12 and Asp131 contribute to the active site.

The protein belongs to the HisA/HisF family. As to quaternary structure, heterodimer of HisH and HisF.

The protein resides in the cytoplasm. It carries out the reaction 5-[(5-phospho-1-deoxy-D-ribulos-1-ylimino)methylamino]-1-(5-phospho-beta-D-ribosyl)imidazole-4-carboxamide + L-glutamine = D-erythro-1-(imidazol-4-yl)glycerol 3-phosphate + 5-amino-1-(5-phospho-beta-D-ribosyl)imidazole-4-carboxamide + L-glutamate + H(+). Its pathway is amino-acid biosynthesis; L-histidine biosynthesis; L-histidine from 5-phospho-alpha-D-ribose 1-diphosphate: step 5/9. In terms of biological role, IGPS catalyzes the conversion of PRFAR and glutamine to IGP, AICAR and glutamate. The HisF subunit catalyzes the cyclization activity that produces IGP and AICAR from PRFAR using the ammonia provided by the HisH subunit. This is Imidazole glycerol phosphate synthase subunit HisF from Burkholderia thailandensis (strain ATCC 700388 / DSM 13276 / CCUG 48851 / CIP 106301 / E264).